Here is a 1023-residue protein sequence, read N- to C-terminus: MDANSKDKPPETKESAMNNAGNASFILGTGKIVTPQKHAELPPNPCTPDTFKSPLNFSTVTVEQLGITPESFVRNSAGKSSSYLKKCRRRSAVGARGSPETNHLIRFIARQQNIKNARKSPLAQDSPSQGSPALYRNVNTLRERISAFQSAFHSIKENEKMTGCLEFSEAGKESEMTDLTRKEGLSACQQSGFPAVLSSKRRRISYQRDSDENLTDAEGKVIGLQIFNIDTDRACAVETSVDLSEISSKLGSTQSGFLVEESLPLSELTETSNALKVADCVVGKGSSDAVSPDTFTAEVSSDAVPDVRSPATPACRRDLPTPKTFVLRSVLKKPSVKMCLESLQEHCNNLYDDDGTHPSLISNLPNCCKEKEAEDEENFEAPAFLNMRKRKRVTFGEDLSPEVFDESLPANTPLRKGGTPVCKKDFSGLSSLLLEQSPVPEPLPQPDFDDKGENLENIEPLQVSFAVLSSPNKSSISETLSGTDTFSSSNNHEKISSPKVGRITRTSNRRNQLVSVVEESVCNLLNTEVQPCKEKKINRRKSQETKCTKRALPKKSQVLKSCRKKKGKGKKSVQKSLYGERDIASKKPLLSPIPELPEVPEMTPSIPSIRRLGSGYFSSNGKLEEVKTPKNPVKRKDLLRHDPDLHMHQGYDKYDVSEFCSYIKSSSSLGNATSDEDPNTNIMNINENKNIPKAKNKSESENEPKAGTDSPVSCASVTEERVASDSPKPALTLQQGQEFSAGGQNAENLCQFFKISPDLNIKCERKDDFLGAAEGKLQCNRLMPNSQKDCHCLGDVLIENTKESKSQSEDLGRKPMESSSVVSCRDRKDRRRSMCYSDGRSLHLEKNGNHTPSSSVGSSVEISLENSELFKDLSDAIEQTFQRRNSETKVRRSTRLQKDLENEGLVWISLPLPSTSQKAKRRTICTFDSSGFESMSPIKETVSSRQKPQMAPPVSDPENSQGPAAGSSDEPGKRRKSFCISTLANTKATSQFKGYRRRSSLNGKGESSLTALERIEHNGERKQ.

Residues 1–14 (MDANSKDKPPETKE) show a composition bias toward basic and acidic residues. Positions 1–21 (MDANSKDKPPETKESAMNNAG) are disordered. Residues S98, S120, S126, S131, S210, S291, and S309 each carry the phosphoserine modification. T312 carries the post-translational modification Phosphothreonine. The PP1-binding domain maps to 389 to 449 (KRKRVTFGED…PEPLPQPDFD (61 aa)). 2 positions are modified to phosphoserine: S400 and S407. At T412 the chain carries Phosphothreonine. S437 is modified (phosphoserine). Residues 542-580 (SQETKCTKRALPKKSQVLKSCRKKKGKGKKSVQKSLYGE) are disordered. The span at 561–573 (SCRKKKGKGKKSV) shows a compositional bias: basic residues. Residues S591 and S614 each carry the phosphoserine modification. A disordered region spans residues 667 to 729 (SSLGNATSDE…ERVASDSPKP (63 aa)). Residues 679 to 691 (NTNIMNINENKNI) are compositionally biased toward low complexity. The segment covering 696–706 (NKSESENEPKA) has biased composition (basic and acidic residues). A phosphoserine mark is found at S710 and S756. K762 is covalently cross-linked (Glycyl lysine isopeptide (Lys-Gly) (interchain with G-Cter in SUMO2)). Over residues 803–816 (ESKSQSEDLGRKPM) the composition is skewed to basic and acidic residues. Disordered regions lie at residues 803-860 (ESKS…GSSV) and 936-1023 (SPIK…ERKQ). A phosphoserine mark is found at S936 and S977. Composition is skewed to polar residues over residues 979 to 992 (CISTLANTKATSQF) and 1000 to 1010 (SLNGKGESSLT). Residue S1000 is modified to Phosphoserine. Over residues 1013 to 1023 (ERIEHNGERKQ) the composition is skewed to basic and acidic residues.

In terms of assembly, interacts with PPP1CC. In terms of processing, phosphorylated by CDK1. May regulate its subcellular location. Ubiquitously expressed.

Its subcellular location is the nucleus. Regulator of chromosome structure during mitosis required for condensin-depleted chromosomes to retain their compact architecture through anaphase. Acts by mediating the recruitment of phopsphatase PP1-gamma subunit (PPP1CC) to chromatin at anaphase and into the following interphase. At anaphase onset, its association with chromatin targets a pool of PPP1CC to dephosphorylate substrates. This Homo sapiens (Human) protein is Cell division cycle-associated protein 2 (CDCA2).